The sequence spans 212 residues: High frequency lysogenization protein HflD homolog (212 aa).

This sequence belongs to the HflD family.

The protein resides in the cytoplasm. It localises to the cell inner membrane. The polypeptide is High frequency lysogenization protein HflD homolog (Stutzerimonas stutzeri (strain A1501) (Pseudomonas stutzeri)).